The sequence spans 524 residues: Adhesion G-protein coupled receptor G5 (524 aa).

The first 23 residues, Met1 to Thr23, serve as a signal peptide directing secretion. The Extracellular segment spans residues Leu24–Tyr246. Residues Asn58, Asn65, Asn96, Asn143, Asn169, and Asn175 are each glycosylated (N-linked (GlcNAc...) asparagine). The 162-residue stretch at Gln74–Pro235 folds into the GAIN-B domain. 2 disulfide bridges follow: Cys185–Cys217 and Cys205–Cys219. The segment at Cys185–Pro235 is GPS. A stachel region spans residues Tyr224–Ser232. A helical transmembrane segment spans residues Ile247–Ala267. At Gln268 to Asn284 the chain is on the cytoplasmic side. The chain crosses the membrane as a helical span at residues Gly285–Met305. Over Pro306–Tyr319 the chain is Extracellular. Cys310 and Cys400 form a disulfide bridge. The helical transmembrane segment at Ala320–Gly340 threads the bilayer. Residues Arg341–Leu351 lie on the Cytoplasmic side of the membrane. The helical transmembrane segment at Leu352–Ile372 threads the bilayer. Residues Lys373–Met413 are Extracellular-facing. N-linked (GlcNAc...) asparagine glycans are attached at residues Asn390 and Asn396. A helical membrane pass occupies residues Gly414–Leu434. Topologically, residues Cys435 to Ala453 are cytoplasmic. The chain crosses the membrane as a helical span at residues Met454–Phe476. Residues Leu477–Gln480 lie on the Extracellular side of the membrane. Residues Leu481–Cys500 form a helical membrane-spanning segment. The Cytoplasmic segment spans residues Ser501 to His524.

This sequence belongs to the G-protein coupled receptor 2 family. Adhesion G-protein coupled receptor (ADGR) subfamily. Heterodimer of 2 chains generated by proteolytic processing; the large extracellular N-terminal fragment and the membrane-bound C-terminal fragment predominantly remain associated and non-covalently linked. Autoproteolytically processed at the GPS region of the GAIN-B domain; this cleavage modulates receptor activity. As to expression, expressed at least in kidney, heart, brain and spleen. Isoform 1 is predominant in spleen. In the kidney, both isoform 1 and isoform 2 are expressed at similar levels. In terms of tissue distribution, isoform 2 is the major form in heart and brain. In the kidney, both isoform 1 and isoform 2 are expressed at similar levels.

The protein resides in the cell membrane. Its activity is regulated as follows. Forms a heterodimer of 2 chains generated by proteolytic processing that remain associated through non-covalent interactions mediated by the GAIN-B domain. In the inactivated receptor, the Stachel sequence (also named stalk) is embedded in the GAIN-B domain, where it adopts a beta-strand conformation. On activation, the Stachel moves into the 7 transmembrane region and adopts a twisted hook-shaped configuration that forms contacts within the receptor, leading to coupling of a G-alpha protein, which activates signaling. The cleaved GAIN-B and N-terminal domains can then dissociate from the rest of the receptor. In terms of biological role, orphan adhesion G-protein coupled receptor (aGPCR). Ligand binding causes a conformation change that triggers signaling via guanine nucleotide-binding proteins (G proteins) and modulates the activity of downstream effectors, such as adenylate cyclase. ADGRG5 is specifically coupled to G(s) G proteins and mediates activation of adenylate cyclase activity. Functionally, isoform 1, but not isoform 2, is constitutively active, as evidenced by elevated basal cAMP levels, and responds to mechanical activation (shaking). The protein is Adhesion G-protein coupled receptor G5 of Mus musculus (Mouse).